The primary structure comprises 260 residues: UPF0246 protein Bcenmc03_2247 (260 aa).

The protein belongs to the UPF0246 family.

The sequence is that of UPF0246 protein Bcenmc03_2247 from Burkholderia orbicola (strain MC0-3).